Consider the following 438-residue polypeptide: Adenosylhomocysteinase (438 aa).

Substrate-binding residues include Thr64, Asp139, and Glu164. Residue 165-167 participates in NAD(+) binding; the sequence is TTT. Substrate is bound by residues Lys194 and Asp198. Residues Asn199, 228–233, Glu251, Asn286, 307–309, and Asn352 each bind NAD(+); these read GYGDVG and IGH.

This sequence belongs to the adenosylhomocysteinase family. NAD(+) serves as cofactor.

Its subcellular location is the cytoplasm. It carries out the reaction S-adenosyl-L-homocysteine + H2O = L-homocysteine + adenosine. It participates in amino-acid biosynthesis; L-homocysteine biosynthesis; L-homocysteine from S-adenosyl-L-homocysteine: step 1/1. Its function is as follows. May play a key role in the regulation of the intracellular concentration of adenosylhomocysteine. In Coxiella burnetii (strain Dugway 5J108-111), this protein is Adenosylhomocysteinase.